A 199-amino-acid chain; its full sequence is DnaJ homolog subfamily C member 5B (199 aa).

Phosphoserine is present on Ser14. The J domain maps to 19–84; the sequence is ALYEILGLHK…SKRSIYDKYG (66 aa).

In terms of assembly, interacts with the chaperone complex consisting of HSC70 and SGTA. In terms of processing, palmitoylated. Palmitoylation is not required for membrane association. As to expression, testis specific.

Its subcellular location is the membrane. The sequence is that of DnaJ homolog subfamily C member 5B (DNAJC5B) from Homo sapiens (Human).